Consider the following 931-residue polypeptide: GPI ethanolamine phosphate transferase 1 (931 aa).

Residue Met-1 is a topological domain, cytoplasmic. Residues 2–22 (LLFFALGLLIHFVFFASIFDI) traverse the membrane as a helical segment. The Lumenal segment spans residues 23–442 (YFTSPLVHGM…SYYHTYDRLF (420 aa)). N-linked (GlcNAc...) asparagine glycosylation is found at Asn-128, Asn-192, Asn-295, and Asn-350. Residues 443–463 (LGINVAVGFVGWMSYTSLLII) traverse the membrane as a helical segment. Residues 464–480 (KSHSNIPKGTRKEGKKP) lie on the Cytoplasmic side of the membrane. A helical membrane pass occupies residues 481–501 (HCLLLYSFIATGVLVACFLMI). Position 502 (Gln-502) is a topological domain, lumenal. Residues 503 to 523 (ACPWTYYVYCLLPVPIWYAVL) form a helical membrane-spanning segment. Topologically, residues 524 to 543 (REHEVIQDLVESLLTFPRSH) are cytoplasmic. A helical membrane pass occupies residues 544 to 564 (FVAYLLVFTLGIEVLVLSFFY). Position 565 (Arg-565) is a topological domain, lumenal. A helical transmembrane segment spans residues 566-586 (YMLTAGLIVFAGWPFLTQLWT). The Cytoplasmic segment spans residues 587-591 (RAKIT). The chain crosses the membrane as a helical span at residues 592 to 612 (FLSWAFFSLLLAVFPLMPVVG). Residues 613 to 618 (RKPNLS) lie on the Lumenal side of the membrane. N-linked (GlcNAc...) asparagine glycosylation occurs at Asn-616. A helical membrane pass occupies residues 619-639 (LVMGAGFLVLLLSLAVVTTLG). Residues 640 to 649 (KRNIKLVKGE) are Cytoplasmic-facing. Residues 650–670 (LLVLLLQMLSTVLSMYVVYST) traverse the membrane as a helical segment. The Lumenal portion of the chain corresponds to 671-685 (HHSLLKKEGLPLMNQ). A helical membrane pass occupies residues 686-706 (IVSWATLASSLVAPLLSSTAL). At 707 to 723 (SQRLASILLSLMSTYLL) the chain is on the cytoplasmic side. The chain crosses the membrane as a helical span at residues 724 to 744 (LSTGYEALFPLVLSCLMFVWI). At 745-786 (QVEQETLQQPGVSCKQKLTSIQFTCDTDIAQFRQLCPDDIRR) the chain is on the lumenal side. The chain crosses the membrane as a helical span at residues 787-807 (AFFLVFFLLTAFFGTGNIASI). The Cytoplasmic segment spans residues 808-824 (NSFDLASVYCFLTVFSP). Residues 825 to 845 (FMMGALMMWKILIPFVLVMCA) form a helical membrane-spanning segment. Residues 846–858 (FEAVQITTQLSSK) lie on the Lumenal side of the membrane. The chain crosses the membrane as a helical span at residues 859 to 879 (GLFLVVLIISDIMALHFFFLV). Residues 880-894 (KDSGSWLDIGTSISH) are Cytoplasmic-facing. Residues 895 to 915 (YVIVMSMTIFLVFLNGLAQLL) traverse the membrane as a helical segment. Over 916–931 (TTKKLQLCGKPKSHLM) the chain is Lumenal.

Belongs to the PIGG/PIGN/PIGO family. PIGN subfamily.

The protein localises to the endoplasmic reticulum membrane. It participates in glycolipid biosynthesis; glycosylphosphatidylinositol-anchor biosynthesis. Its function is as follows. Ethanolamine phosphate transferase that catalyzes an ethanolamine phosphate (EtNP) transfer from phosphatidylethanolamine (PE) to the 2-OH position of the first alpha-1,4-linked mannose of the alpha-D-Man-(1-&gt;6)-alpha-D-Man-(1-&gt;4)-alpha-D-GlcN-(1-&gt;6)-(1-radyl,2-acyl-sn-glycero-3-phospho)-2-acyl-inositol (also termed H3) intermediate to generate an alpha-D-Man-(1-&gt;6)-2-PEtn-alpha-D-Man-(1-&gt;4)-alpha-D-GlcN-(1-&gt;6)-(1-radyl,2-acyl-sn-glycero-3-phospho)-2-acyl-inositol and participates in the eighth step of the glycosylphosphatidylinositol-anchor biosynthesis. May act as suppressor of replication stress and chromosome missegregation. The polypeptide is GPI ethanolamine phosphate transferase 1 (Mus musculus (Mouse)).